The chain runs to 163 residues: Ankyrin repeat domain-containing protein 37 (163 aa).

ANK repeat units lie at residues 29-58 (LGQS…DVNQ), 62-91 (FGEA…RIDM), and 95-124 (DGHT…TQDT). A Nuclear localization signal motif is present at residues 129 to 149 (QSSLHNLKETAAGVKRGQCCQ).

The protein localises to the nucleus. It localises to the cytoplasm. The polypeptide is Ankyrin repeat domain-containing protein 37 (ankrd37) (Xenopus tropicalis (Western clawed frog)).